The chain runs to 709 residues: Rho guanine nucleotide exchange factor 16 (709 aa).

Alanine 2 is subject to N-acetylalanine. Phosphoserine is present on residues serine 6, serine 41, and serine 107. The tract at residues 22 to 70 (ELRLDAGGNPASGLPMVRGSPRVRDDAAFQPQVPAPPQPRPPGHEEPWP) is disordered. The segment at 114–146 (SREAARRDPKLLPAPSFSLDDMDVDKDPGGMLR) is disordered. Phosphoserine occurs at positions 174, 191, and 208. A disordered region spans residues 180–246 (LAEEPSQPHT…ESSSPEGTQK (67 aa)). A compositionally biased stretch (basic residues) spans 191–207 (SPAKNKKTLGRKRGHKG). At threonine 226 the chain carries Phosphothreonine. Phosphoserine is present on residues serine 227, serine 230, and serine 240. Residues 275–481 (LDQLSTEERK…MERMEQMYTL (207 aa)) form a required for RHOG activation and mediates interaction with EPHA2 region. Positions 284–468 (KRQEAMFEIL…SKLVRQCNEG (185 aa)) constitute a DH domain. Residues 501 to 620 (WLLKRGELFL…WIVALTHSER (120 aa)) form the PH domain. The 61-residue stretch at 629 to 689 (GDLPQVEITK…PEDFARFITS (61 aa)) folds into the SH3 domain. A PDZ-binding motif motif is present at residues 707-709 (TDV).

As to quaternary structure, interacts with ELMO2, EPHA2, RAC1 and RHOG; mediates activation of RAC1 by EPHA2. Interacts with TAX1BP3 (via PDZ domain). May interact with CDC42; stimulated by HPV16 E6.

Its subcellular location is the cytoplasm. Guanyl-nucleotide exchange factor of the RHOG GTPase stimulating the exchange of RHOG-associated GDP for GTP. May play a role in chemotactic cell migration by mediating the activation of RAC1 by EPHA2. May also activate CDC42 and mediate activation of CDC42 by the viral protein HPV16 E6. This is Rho guanine nucleotide exchange factor 16 (ARHGEF16) from Homo sapiens (Human).